Consider the following 262-residue polypeptide: Small ribosomal subunit protein eS1 (262 aa).

The protein belongs to the eukaryotic ribosomal protein eS1 family. Component of the small ribosomal subunit. Mature ribosomes consist of a small (40S) and a large (60S) subunit. The 40S subunit contains about 33 different proteins and 1 molecule of RNA (18S). The 60S subunit contains about 49 different proteins and 3 molecules of RNA (25S, 5.8S and 5S).

It is found in the cytoplasm. The chain is Small ribosomal subunit protein eS1 from Cryptosporidium hominis.